Consider the following 327-residue polypeptide: MASFSPLLAMALAIFIFSSHSNAQLSSTFYSTTCPNVSAIVRTVVQQALQNDARIGGSLIRLHFHDCFVDGCDGSLLLDNNGTTIVSEKDALPNTNSTRGFDVVDNIKTAVENACPGVVSCVDILALASESSVSLAGGPSWNVLLGRRDRRTANQGGANTSLPSPFENLTNLTQKFTNVGLNVNDLVALSGAHTFGRAQCRTFSPRLFNFSNTGNPDPTLNTTYLATLQQICPQGGSGFTVTNLDPTTPDTFDNNYFSNLQTNRGLLQSDQELFSTSGAPTIAIVNNFSANQTAFFESFVQSMINMGNISPLTGSNGEIRSNCRRPN.

Residues 1–23 (MASFSPLLAMALAIFIFSSHSNA) form the signal peptide. Glutamine 24 bears the Pyrrolidone carboxylic acid mark. Intrachain disulfides connect cysteine 34–cysteine 115, cysteine 67–cysteine 72, cysteine 121–cysteine 323, and cysteine 200–cysteine 232. Asparagine 36 carries N-linked (GlcNAc...) asparagine glycosylation. Histidine 65 acts as the Proton acceptor in catalysis. Positions 66, 69, 71, 73, and 75 each coordinate Ca(2+). N-linked (GlcNAc...) asparagine glycosylation is found at asparagine 81, asparagine 96, and asparagine 159. Proline 163 serves as a coordination point for substrate. Residues asparagine 168 and asparagine 171 are each glycosylated (N-linked (GlcNAc...) asparagine). Histidine 193 serves as a coordination point for heme b. Threonine 194 contacts Ca(2+). Asparagine 209 and asparagine 221 each carry an N-linked (GlcNAc...) asparagine glycan. Ca(2+) contacts are provided by aspartate 245, threonine 248, and aspartate 253. 2 N-linked (GlcNAc...) asparagine glycosylation sites follow: asparagine 287 and asparagine 291.

It belongs to the peroxidase family. Classical plant (class III) peroxidase subfamily. Ca(2+) is required as a cofactor. The cofactor is heme b.

The protein resides in the secreted. The enzyme catalyses 2 a phenolic donor + H2O2 = 2 a phenolic radical donor + 2 H2O. Its function is as follows. Removal of H(2)O(2), oxidation of toxic reductants, biosynthesis and degradation of lignin, suberization, auxin catabolism, response to environmental stresses such as wounding, pathogen attack and oxidative stress. These functions might be dependent on each isozyme/isoform in each plant tissue. The chain is Peroxidase 15 from Ipomoea batatas (Sweet potato).